The sequence spans 532 residues: Phosphoenolpyruvate carboxykinase (ATP) (532 aa).

Residues R60, Y194, and K200 each coordinate substrate. ATP contacts are provided by residues K200, H219, and 237-245; that span reads GLSGTGKTT. K200 and H219 together coordinate Mn(2+). A Mn(2+)-binding site is contributed by D258. The ATP site is built by E286, R324, and T449. Position 324 (R324) interacts with substrate.

This sequence belongs to the phosphoenolpyruvate carboxykinase (ATP) family. Mn(2+) serves as cofactor.

Its subcellular location is the cytoplasm. The enzyme catalyses oxaloacetate + ATP = phosphoenolpyruvate + ADP + CO2. The protein operates within carbohydrate biosynthesis; gluconeogenesis. Functionally, involved in the gluconeogenesis. Catalyzes the conversion of oxaloacetate (OAA) to phosphoenolpyruvate (PEP) through direct phosphoryl transfer between the nucleoside triphosphate and OAA. This Ruegeria sp. (strain TM1040) (Silicibacter sp.) protein is Phosphoenolpyruvate carboxykinase (ATP).